Here is a 302-residue protein sequence, read N- to C-terminus: tRNA pseudouridine synthase B (302 aa).

The active-site Nucleophile is the Asp45.

The protein belongs to the pseudouridine synthase TruB family. Type 1 subfamily.

The catalysed reaction is uridine(55) in tRNA = pseudouridine(55) in tRNA. Responsible for synthesis of pseudouridine from uracil-55 in the psi GC loop of transfer RNAs. The chain is tRNA pseudouridine synthase B from Francisella tularensis subsp. tularensis (strain WY96-3418).